We begin with the raw amino-acid sequence, 311 residues long: Malate dehydrogenase (311 aa).

Residues 7–13 (GAAGGIG) and aspartate 34 contribute to the NAD(+) site. Positions 81 and 87 each coordinate substrate. NAD(+) is bound by residues asparagine 94 and 117-119 (ITN). Asparagine 119 and arginine 153 together coordinate substrate. Histidine 177 (proton acceptor) is an active-site residue. An NAD(+)-binding site is contributed by methionine 227.

The protein belongs to the LDH/MDH superfamily. MDH type 1 family. As to quaternary structure, homodimer.

The catalysed reaction is (S)-malate + NAD(+) = oxaloacetate + NADH + H(+). Functionally, catalyzes the reversible oxidation of malate to oxaloacetate. The protein is Malate dehydrogenase of Haemophilus influenzae (strain PittGG).